Reading from the N-terminus, the 130-residue chain is Small ribosomal subunit protein bS6 (130 aa).

Residues 100-130 (SPMVKAKDERRERREDFAEAGDDVEAGDSEE) form a disordered region. Positions 104–116 (KAKDERRERREDF) are enriched in basic and acidic residues. Over residues 117–130 (AEAGDDVEAGDSEE) the composition is skewed to acidic residues.

It belongs to the bacterial ribosomal protein bS6 family.

Binds together with bS18 to 16S ribosomal RNA. This Pectobacterium atrosepticum (strain SCRI 1043 / ATCC BAA-672) (Erwinia carotovora subsp. atroseptica) protein is Small ribosomal subunit protein bS6.